Here is a 78-residue protein sequence, read N- to C-terminus: Delta-conotoxin-like Ai6.1 (78 aa).

Residues 1-22 (MKLTCVMIVAVLFLTAWTFATA) form the signal peptide. Residues 23 to 49 (DDPRNGLGNLFSNAHHEMKNPEASKLN) constitute a propeptide that is removed on maturation. Cystine bridges form between Cys-53/Cys-68, Cys-60/Cys-72, and Cys-67/Cys-77.

The protein belongs to the conotoxin O1 superfamily. In terms of tissue distribution, expressed by the venom duct.

Its subcellular location is the secreted. In terms of biological role, delta-conotoxins bind to site 6 of voltage-gated sodium channels (Nav) and inhibit the inactivation process. The polypeptide is Delta-conotoxin-like Ai6.1 (Conus ammiralis (Admiral cone)).